A 310-amino-acid polypeptide reads, in one-letter code: Lipoyl synthase (310 aa).

[4Fe-4S] cluster is bound by residues cysteine 41, cysteine 46, cysteine 52, cysteine 68, cysteine 72, cysteine 75, and serine 281. In terms of domain architecture, Radical SAM core spans 54 to 270 (GERRTATFMI…RKVAMEKGFK (217 aa)). A disordered region spans residues 285-310 (DEQVNEAAKERQRIGDEKLEAAKNEA).

It belongs to the radical SAM superfamily. Lipoyl synthase family. It depends on [4Fe-4S] cluster as a cofactor.

The protein resides in the cytoplasm. It catalyses the reaction [[Fe-S] cluster scaffold protein carrying a second [4Fe-4S](2+) cluster] + N(6)-octanoyl-L-lysyl-[protein] + 2 oxidized [2Fe-2S]-[ferredoxin] + 2 S-adenosyl-L-methionine + 4 H(+) = [[Fe-S] cluster scaffold protein] + N(6)-[(R)-dihydrolipoyl]-L-lysyl-[protein] + 4 Fe(3+) + 2 hydrogen sulfide + 2 5'-deoxyadenosine + 2 L-methionine + 2 reduced [2Fe-2S]-[ferredoxin]. It functions in the pathway protein modification; protein lipoylation via endogenous pathway; protein N(6)-(lipoyl)lysine from octanoyl-[acyl-carrier-protein]. Catalyzes the radical-mediated insertion of two sulfur atoms into the C-6 and C-8 positions of the octanoyl moiety bound to the lipoyl domains of lipoate-dependent enzymes, thereby converting the octanoylated domains into lipoylated derivatives. The protein is Lipoyl synthase of Staphylococcus carnosus (strain TM300).